The following is a 422-amino-acid chain: Osteomodulin (422 aa).

Positions 1–20 (MGFSSLVCVLFFFLGVKVYC) are cleaved as a signal peptide. A propeptide spanning residues 21–27 (QYESYQW) is cleaved from the precursor. Sulfotyrosine is present on residues Y22, Y25, Y31, Y39, Y51, and Y77. One can recognise an LRRNT domain in the interval 53-91 (APFHQHTLGCASECFCPPNFPSSMYCDNRKLKTIPNIPA). LRR repeat units follow at residues 92–113 (HIQQVYLQFNEIEAVTADSFIN), 116–129 (HLKEINLSHNKIKS), 142–164 (NLLQLHLQHNNLEDFPFPLPKSL), 165–184 (ERIFLGYNEISRLQTNAVNG), 187–207 (NLTMLDLCFNKIDDSVLQEKV), 213–233 (KLMQLNLCNNRLESMPPGLPS), 234–255 (SLMYLSLENNSISSIPENYFNK), 258–280 (KLHALRISHNKLQDIPYNIFNLS), 281–294 (NLIELNVGHNKLKQ), 301–322 (NLEHLYLENNEIENVNVTVMCP), and 331–353 (HLTHIRIDQNKLKAPISSYIFLC). Residues N113 and N121 are each glycosylated (N-linked (GlcNAc...) asparagine). A glycan (N-linked (GlcNAc...) asparagine) is linked at N187. Residues N242 and N278 are each glycosylated (N-linked (GlcNAc...) asparagine). N-linked (GlcNAc...) asparagine glycosylation occurs at N316. A disulfide bond links C321 and C353. The disordered stretch occupies residues 385–422 (DDGDSEDHDDHHEGPEEEGTEENIDAHYYGSQEWQETI). A sulfotyrosine mark is found at Y412 and Y413.

This sequence belongs to the small leucine-rich proteoglycan (SLRP) family. SLRP class II subfamily. As to quaternary structure, binds the alpha(V)beta(3)-integrin. The N-terminus is blocked. Post-translationally, glycosylated; contains keratan sulfate. In terms of processing, sulfated on tyrosine residue(s). In terms of tissue distribution, bone specific (at protein level).

It localises to the secreted. Its subcellular location is the extracellular space. It is found in the extracellular matrix. May be implicated in biomineralization processes. Has a function in binding of osteoblasts via the alpha(V)beta(3)-integrin. The protein is Osteomodulin (OMD) of Bos taurus (Bovine).